Reading from the N-terminus, the 277-residue chain is Large ribosomal subunit protein uL2 (277 aa).

Residues 222 to 277 (GVAMNPVDHPHGGGEGRTSGGRHPVTPWGKPTKGKKTRSNKATDKFIMRSRHQRKK) are disordered.

The protein belongs to the universal ribosomal protein uL2 family. In terms of assembly, part of the 50S ribosomal subunit. Forms a bridge to the 30S subunit in the 70S ribosome.

Functionally, one of the primary rRNA binding proteins. Required for association of the 30S and 50S subunits to form the 70S ribosome, for tRNA binding and peptide bond formation. It has been suggested to have peptidyltransferase activity; this is somewhat controversial. Makes several contacts with the 16S rRNA in the 70S ribosome. This chain is Large ribosomal subunit protein uL2, found in Brucella melitensis biotype 1 (strain ATCC 23456 / CCUG 17765 / NCTC 10094 / 16M).